We begin with the raw amino-acid sequence, 197 residues long: UDP-N-acetylglucosamine transferase subunit alg13 (197 aa).

The disordered stretch occupies residues 174-197 (VRGPDQKNQPTLEQVMSDEMGFVD).

It belongs to the glycosyltransferase 28 family. Heterodimer with alg14 to form a functional enzyme.

The protein localises to the endoplasmic reticulum. It carries out the reaction an N-acetyl-alpha-D-glucosaminyl-diphospho-di-trans,poly-cis-dolichol + UDP-N-acetyl-alpha-D-glucosamine = an N,N'-diacetylchitobiosyl-diphospho-di-trans,poly-cis-dolichol + UDP + H(+). Its function is as follows. Involved in protein N-glycosylation. Essential for the second step of the dolichol-linked oligosaccharide pathway. The sequence is that of UDP-N-acetylglucosamine transferase subunit alg13 (alg13) from Aspergillus fumigatus (strain ATCC MYA-4609 / CBS 101355 / FGSC A1100 / Af293) (Neosartorya fumigata).